The primary structure comprises 302 residues: Mitochondrial glycine transporter (302 aa).

Solcar repeat units follow at residues 22 to 112 (HPVF…LKHH), 119 to 203 (PKPL…AKKL), and 213 to 297 (FSPV…MMEK). 6 consecutive transmembrane segments (helical) span residues 28–53 (FVCG…TRLQ), 87–113 (GVSP…KHHF), 125–150 (VMLG…TRYE), 178–201 (GLTA…TRAK), 217–243 (LNFG…KTHI), and 272–290 (GGLP…AWTV).

This sequence belongs to the mitochondrial carrier (TC 2.A.29) family. SLC25A38 subfamily.

It localises to the mitochondrion inner membrane. The catalysed reaction is glycine(in) = glycine(out). Mitochondrial glycine transporter that imports glycine into the mitochondrial matrix. Plays an important role in providing glycine for the first enzymatic step in heme biosynthesis, the condensation of glycine with succinyl-CoA to produce 5-aminolevulinate (ALA) in the mitochondrial matrix. Required during erythropoiesis. In terms of biological role, may play a role as pro-apoptotic protein that induces caspase-dependent apoptosis. This Xenopus tropicalis (Western clawed frog) protein is Mitochondrial glycine transporter.